The chain runs to 108 residues: NADH dehydrogenase [ubiquinone] flavoprotein 3, mitochondrial (108 aa).

A mitochondrion-targeting transit peptide spans 1-34 (MAASCLLRQGRAGALKTMLQEAQVFRGLASTVSL). The disordered stretch occupies residues 33 to 72 (SLSAESGKSEKGQPQNSKKQSPPKKPAPVPAEPFDNSTYK). Position 105 is a phosphoserine (Ser105).

The protein belongs to the complex I NDUFV3 subunit family. In terms of assembly, complex I is composed of 45 different subunits. This is a component of the flavoprotein-sulfur (FP) fragment of the enzyme.

It is found in the mitochondrion inner membrane. Accessory subunit of the mitochondrial membrane respiratory chain NADH dehydrogenase (Complex I), that is believed not to be involved in catalysis. Complex I functions in the transfer of electrons from NADH to the respiratory chain. The immediate electron acceptor for the enzyme is believed to be ubiquinone. May be the terminally assembled subunit of Complex I. The polypeptide is NADH dehydrogenase [ubiquinone] flavoprotein 3, mitochondrial (NDUFV3) (Gorilla gorilla gorilla (Western lowland gorilla)).